We begin with the raw amino-acid sequence, 534 residues long: Calcium-dependent protein kinase 29 (534 aa).

Residues 1–72 (MGFCFSKFGK…STSSGSQIGP (72 aa)) form a disordered region. Glycine 2 is lipidated: N-myristoyl glycine. A compositionally biased stretch (low complexity) spans 16–27 (IPISSSSDSSPP). A compositionally biased stretch (pro residues) spans 49–63 (NPQPKPKPAPPPPPS). The 259-residue stretch at 85–343 (YDLHKELGRG…AAEALEHPWM (259 aa)) folds into the Protein kinase domain. Residues 91–99 (LGRGQFGIT) and lysine 114 each bind ATP. Residue aspartate 209 is the Proton acceptor of the active site. Serine 249 is modified (phosphoserine). Residues 348–378 (ISDKPINSAVLVRMKQFRAMNKLKKLALKVI) are autoinhibitory domain. EF-hand domains are found at residues 385–420 (EEIKGLKQTFKNMDTDESGTITFDELRNGLHRLGSK), 421–456 (LTESEIKQLMEAADVDKSGTIDYIEFVTATMHRHRL), 457–492 (EKEENLIEAFKYFDKDRSGFITRDELKHSMTEYGMG), and 493–527 (DDATIDEVINDVDTDNDGRINYEEFVAMMRKGTTD). Ca(2+) contacts are provided by aspartate 398, aspartate 400, serine 402, threonine 404, glutamate 409, aspartate 434, aspartate 436, serine 438, threonine 440, glutamate 445, aspartate 470, aspartate 472, serine 474, glutamate 481, aspartate 505, aspartate 507, aspartate 509, arginine 511, and glutamate 516.

The protein belongs to the protein kinase superfamily. Ser/Thr protein kinase family. CDPK subfamily.

The protein resides in the membrane. It carries out the reaction L-seryl-[protein] + ATP = O-phospho-L-seryl-[protein] + ADP + H(+). The enzyme catalyses L-threonyl-[protein] + ATP = O-phospho-L-threonyl-[protein] + ADP + H(+). Its activity is regulated as follows. Activated by calcium. Autophosphorylation may play an important role in the regulation of the kinase activity. Its function is as follows. May play a role in signal transduction pathways that involve calcium as a second messenger. This is Calcium-dependent protein kinase 29 (CPK29) from Arabidopsis thaliana (Mouse-ear cress).